The sequence spans 223 residues: MKRN2 opposite strand protein (223 aa).

In Homo sapiens (Human), this protein is MKRN2 opposite strand protein (MKRN2OS).